The primary structure comprises 949 residues: Isoleucine--tRNA ligase (949 aa).

The short motif at 58–68 (PYANGDIHIGH) is the 'HIGH' region element. Residue glutamate 567 coordinates L-isoleucyl-5'-AMP. The short motif at 608-612 (KMSKS) is the 'KMSKS' region element. Lysine 611 is an ATP binding site. Zn(2+) is bound by residues cysteine 912, cysteine 915, cysteine 932, and cysteine 935.

It belongs to the class-I aminoacyl-tRNA synthetase family. IleS type 1 subfamily. In terms of assembly, monomer. Zn(2+) serves as cofactor.

The protein localises to the cytoplasm. It catalyses the reaction tRNA(Ile) + L-isoleucine + ATP = L-isoleucyl-tRNA(Ile) + AMP + diphosphate. Functionally, catalyzes the attachment of isoleucine to tRNA(Ile). As IleRS can inadvertently accommodate and process structurally similar amino acids such as valine, to avoid such errors it has two additional distinct tRNA(Ile)-dependent editing activities. One activity is designated as 'pretransfer' editing and involves the hydrolysis of activated Val-AMP. The other activity is designated 'posttransfer' editing and involves deacylation of mischarged Val-tRNA(Ile). This Vibrio cholerae serotype O1 (strain ATCC 39315 / El Tor Inaba N16961) protein is Isoleucine--tRNA ligase.